The primary structure comprises 295 residues: F-box protein SKIP24 (295 aa).

Residues V19–S66 form the F-box; degenerate domain. Coiled coils occupy residues R82–Q129 and E167–K209. A disordered region spans residues K217–S245. A compositionally biased stretch (polar residues) spans T235–S245.

As to quaternary structure, part of a SCF (ASK-cullin-F-box) protein ligase complex. Interacts with SKP1A/ASK1 and SPK1B/ASK2.

It functions in the pathway protein modification; protein ubiquitination. In terms of biological role, component of SCF(ASK-cullin-F-box) E3 ubiquitin ligase complexes, which may mediate the ubiquitination and subsequent proteasomal degradation of target proteins. This chain is F-box protein SKIP24 (SKIP24), found in Arabidopsis thaliana (Mouse-ear cress).